The sequence spans 207 residues: ATP-dependent Clp protease proteolytic subunit (207 aa).

Positions 1 to 14 (MSYSGERDNLAPHM) are excised as a propeptide. Serine 111 serves as the catalytic Nucleophile. Histidine 136 is an active-site residue.

It belongs to the peptidase S14 family. Fourteen ClpP subunits assemble into 2 heptameric rings which stack back to back to give a disk-like structure with a central cavity, resembling the structure of eukaryotic proteasomes. Component of the ClpAP and ClpXP complexes.

The protein localises to the cytoplasm. It carries out the reaction Hydrolysis of proteins to small peptides in the presence of ATP and magnesium. alpha-casein is the usual test substrate. In the absence of ATP, only oligopeptides shorter than five residues are hydrolyzed (such as succinyl-Leu-Tyr-|-NHMec, and Leu-Tyr-Leu-|-Tyr-Trp, in which cleavage of the -Tyr-|-Leu- and -Tyr-|-Trp bonds also occurs).. Functionally, cleaves peptides in various proteins in a process that requires ATP hydrolysis. Has a chymotrypsin-like activity. Plays a major role in the degradation of misfolded proteins. The chain is ATP-dependent Clp protease proteolytic subunit from Salmonella paratyphi A (strain ATCC 9150 / SARB42).